A 502-amino-acid chain; its full sequence is Mannitol dehydrogenase 2 (502 aa).

This sequence belongs to the mannitol dehydrogenase family.

It carries out the reaction D-mannitol + NAD(+) = D-fructose + NADH + H(+). Catalyzes the NAD(H)-dependent interconversion of D-fructose and D-mannitol in the mannitol metabolic pathway. This chain is Mannitol dehydrogenase 2, found in Saccharomyces cerevisiae (strain ATCC 204508 / S288c) (Baker's yeast).